The sequence spans 34 residues: Mu-theraphotoxin-Pspp1 (34 aa).

Intrachain disulfides connect Cys2–Cys17, Cys9–Cys22, and Cys16–Cys29. Phe34 carries the phenylalanine amide modification.

It belongs to the neurotoxin 10 (Hwtx-1) family. As to expression, expressed by the venom gland.

It localises to the secreted. Functionally, voltage-gated sodium channel inhibitor. It is unclear if it selectively inhibits Nav1.7/SCN9A or shows similar potency on all sodium channels tested. According to Escoubas et al., 2006 and Nicolas et al., 2019, it is selective over Nav1.7/SCN9A (90% inhibition at 1 uM), versus Nav1.4 and Nav1.6 (35% inhibition), and shows a small inhibition on all other sodium channels (except Nav1.8/SCN10A). According to Goncalves et al., 2019, it shows a similar inhibition on almost all sodium channels tested (Nav1.1/SCN1A (IC(50)=280.3 nM), Nav1.2/SCN2A (IC(50)=73.7 nM), Nav1.3/SCN3A (IC(50)=201.5 nM), Nav1.4/SCN4A (IC(50)&gt;2100 nM), Nav1.5/SCN5A (IC(50)=710.6 nM), Nav1.6/SCN8A (IC(50)=491.2 nM), and Nav1.7/SCN9A (IC(50)=254.3-260 nM)), except Nav1.8/SCN10A. The voltage-dependence of steady-state Nav1.7/SCN9A channel activation and inactivation are not affected, suggesting that is does not act as a gating-modifier toxin but rather blocks or impedes ion flux through the channel pore. The toxin effect is partial and poorly reversible. In addition to its inhibition to sodium channels, it also shows a small inhibition on rat Kv3.4/KCNC4 potassium channels (20% inhibition at 1 uM). In vivo, when tested on pain models, it shows analgesic activity. In Phlogiellus sp. (Tarantula), this protein is Mu-theraphotoxin-Pspp1.